A 149-amino-acid polypeptide reads, in one-letter code: Transcriptional repressor NrdR (149 aa).

Residues 3-34 fold into a zinc finger; that stretch reads CPFCGANDTKVIDSRLVADGHQVRRRRQCLAC. The ATP-cone domain maps to 49–139; sequence PRVIKTDGNR…VYRSFEDIRE (91 aa).

Belongs to the NrdR family. Requires Zn(2+) as cofactor.

Its function is as follows. Negatively regulates transcription of bacterial ribonucleotide reductase nrd genes and operons by binding to NrdR-boxes. This Photobacterium profundum (strain SS9) protein is Transcriptional repressor NrdR.